A 435-amino-acid polypeptide reads, in one-letter code: Trigger factor (435 aa).

The region spanning 162-247 (GDRVIIDFKG…VKNVAEATLP (86 aa)) is the PPIase FKBP-type domain.

It belongs to the FKBP-type PPIase family. Tig subfamily.

Its subcellular location is the cytoplasm. The enzyme catalyses [protein]-peptidylproline (omega=180) = [protein]-peptidylproline (omega=0). Involved in protein export. Acts as a chaperone by maintaining the newly synthesized protein in an open conformation. Functions as a peptidyl-prolyl cis-trans isomerase. The polypeptide is Trigger factor (Chromobacterium violaceum (strain ATCC 12472 / DSM 30191 / JCM 1249 / CCUG 213 / NBRC 12614 / NCIMB 9131 / NCTC 9757 / MK)).